We begin with the raw amino-acid sequence, 602 residues long: Alpha-glucosides permease MPH3 (602 aa).

At 1-106 (MKNLSFLINR…AAAWSLLVST (106 aa)) the chain is on the cytoplasmic side. A helical transmembrane segment spans residues 107–127 (TLIMEGYDTAILGAFYALPIF). The Extracellular segment spans residues 128 to 142 (QRKFGSQNDKTGEWE). Residues 143 to 163 (ISASWQIGLTLCYMAGEIVGL) traverse the membrane as a helical segment. The Cytoplasmic portion of the chain corresponds to 164–178 (QLTGPSVDLVGNRYT). The helical transmembrane segment at 179–199 (LIIALFFLAAFTFILYFCNSL) threads the bilayer. Position 200 (Gly-200) is a topological domain, extracellular. Residues 201-221 (MIAVGQALCGMPWGCFQCLTV) traverse the membrane as a helical segment. The Cytoplasmic segment spans residues 222 to 234 (SYASEICPLALRY). Residues 235 to 255 (YLTTYSNLCWLFGQLFAAGIM) traverse the membrane as a helical segment. The Extracellular segment spans residues 256 to 270 (KNSQKKYADSELGYK). The chain crosses the membrane as a helical span at residues 271-291 (LPFALQWILPVPLALGIFFAP). The Cytoplasmic segment spans residues 292-363 (ESPWWLVKKG…EDKINRRRTR (72 aa)). The helical transmembrane segment at 364-384 (ITCLCWAGQATCGSILIGYST) threads the bilayer. Residues 385–397 (YFYEKAGVSTEMS) lie on the Extracellular side of the membrane. Residues 398–418 (FTFSIIQYCLGICATFLSWWA) form a helical membrane-spanning segment. Topologically, residues 419–426 (SKYFGRYD) are cytoplasmic. A helical transmembrane segment spans residues 427–447 (LYAFGLAFQTIVFFIIGGLGC). Over 448–459 (SSTHGSKMGSGS) the chain is Extracellular. The chain crosses the membrane as a helical span at residues 460–480 (LLMAVAFFYNLGIAPVVFCLV). Residues 481–492 (SEMPSSRLRTKT) lie on the Cytoplasmic side of the membrane. The chain crosses the membrane as a helical span at residues 493–513 (IILARNTYNVVSIICSVLILY). At 514–525 (QLNSKKWNWGAK) the chain is on the extracellular side. The chain crosses the membrane as a helical span at residues 526 to 546 (SGFFWGVLCFCTLIWAVVDLP). Residues 547-602 (ETAGKTFVEINELFKLGVSARKFKSTKVDPFVVKTPPKDVSHNDPKGDIEASIAEE) lie on the Cytoplasmic side of the membrane. Residues 582 to 595 (PPKDVSHNDPKGDI) are compositionally biased toward basic and acidic residues. Residues 582 to 602 (PPKDVSHNDPKGDIEASIAEE) are disordered.

The protein belongs to the major facilitator superfamily. Sugar transporter (TC 2.A.1.1) family.

The protein localises to the cell membrane. Its function is as follows. High-affinity uptake of maltose and maltotriose. Also transports alpha-methylglucoside, glucose and turanose but not melezitose or trehalose. The chain is Alpha-glucosides permease MPH3 (MPH3) from Saccharomyces cerevisiae (strain ATCC 204508 / S288c) (Baker's yeast).